The chain runs to 257 residues: Gene 3 protein (257 aa).

Positions 163-176 (STENLLGQTQSSTH) are enriched in polar residues. Positions 163 to 257 (STENLLGQTQ…SDSSVSSVFF (95 aa)) are disordered. Residues 214 to 240 (SIREETVSGMARAREECNSPSEHDRLT) are compositionally biased toward basic and acidic residues.

In Equine herpesvirus 1 (strain Ab4p) (EHV-1), this protein is Gene 3 protein.